The primary structure comprises 153 residues: 3-hydroxyacyl-[acyl-carrier-protein] dehydratase FabZ (153 aa).

The active site involves histidine 57.

The protein belongs to the thioester dehydratase family. FabZ subfamily.

The protein localises to the cytoplasm. The enzyme catalyses a (3R)-hydroxyacyl-[ACP] = a (2E)-enoyl-[ACP] + H2O. Involved in unsaturated fatty acids biosynthesis. Catalyzes the dehydration of short chain beta-hydroxyacyl-ACPs and long chain saturated and unsaturated beta-hydroxyacyl-ACPs. This Aeromonas salmonicida (strain A449) protein is 3-hydroxyacyl-[acyl-carrier-protein] dehydratase FabZ.